Here is a 66-residue protein sequence, read N- to C-terminus: Large ribosomal subunit protein bL31 (66 aa).

Zn(2+) contacts are provided by Cys16, Cys18, Cys36, and Cys39.

Belongs to the bacterial ribosomal protein bL31 family. Type A subfamily. Part of the 50S ribosomal subunit. The cofactor is Zn(2+).

In terms of biological role, binds the 23S rRNA. In Pelobacter propionicus (strain DSM 2379 / NBRC 103807 / OttBd1), this protein is Large ribosomal subunit protein bL31.